Reading from the N-terminus, the 325-residue chain is Tetraacyldisaccharide 4'-kinase (325 aa).

ATP is bound at residue 58-65 (TVGGSGKT).

Belongs to the LpxK family.

It carries out the reaction a lipid A disaccharide + ATP = a lipid IVA + ADP + H(+). The protein operates within glycolipid biosynthesis; lipid IV(A) biosynthesis; lipid IV(A) from (3R)-3-hydroxytetradecanoyl-[acyl-carrier-protein] and UDP-N-acetyl-alpha-D-glucosamine: step 6/6. In terms of biological role, transfers the gamma-phosphate of ATP to the 4'-position of a tetraacyldisaccharide 1-phosphate intermediate (termed DS-1-P) to form tetraacyldisaccharide 1,4'-bis-phosphate (lipid IVA). The chain is Tetraacyldisaccharide 4'-kinase from Coxiella burnetii (strain Dugway 5J108-111).